The following is a 403-amino-acid chain: Acetylornithine aminotransferase (403 aa).

Residues 107–108 (GA) and F140 each bind pyridoxal 5'-phosphate. R143 provides a ligand contact to N(2)-acetyl-L-ornithine. Residue 225–228 (DEVQ) participates in pyridoxal 5'-phosphate binding. N6-(pyridoxal phosphate)lysine is present on K254. S282 contacts N(2)-acetyl-L-ornithine. T283 lines the pyridoxal 5'-phosphate pocket.

This sequence belongs to the class-III pyridoxal-phosphate-dependent aminotransferase family. ArgD subfamily. Homodimer. Pyridoxal 5'-phosphate serves as cofactor.

It localises to the cytoplasm. The enzyme catalyses N(2)-acetyl-L-ornithine + 2-oxoglutarate = N-acetyl-L-glutamate 5-semialdehyde + L-glutamate. The protein operates within amino-acid biosynthesis; L-arginine biosynthesis; N(2)-acetyl-L-ornithine from L-glutamate: step 4/4. The protein is Acetylornithine aminotransferase of Vibrio cholerae serotype O1 (strain ATCC 39315 / El Tor Inaba N16961).